We begin with the raw amino-acid sequence, 84 residues long: Sulfur carrier protein TusA (84 aa).

Residue Cys19 is the Cysteine persulfide intermediate of the active site.

The protein belongs to the sulfur carrier protein TusA family. In terms of assembly, interacts with IscS.

Its subcellular location is the cytoplasm. Its pathway is tRNA modification. Its function is as follows. Sulfur carrier protein involved in sulfur trafficking in the cell. Part of a sulfur-relay system required for 2-thiolation during synthesis of 2-thiouridine of the modified wobble base 5-methylaminomethyl-2-thiouridine (mnm(5)s(2)U) in tRNA. Interacts with IscS and stimulates its cysteine desulfurase activity. Accepts an activated sulfur from IscS, which is then transferred to TusD, and thus determines the direction of sulfur flow from IscS to 2-thiouridine formation. Also appears to be involved in sulfur transfer for the biosynthesis of molybdopterin. The sequence is that of Sulfur carrier protein TusA from Yersinia pseudotuberculosis serotype O:1b (strain IP 31758).